The chain runs to 175 residues: Orotate phosphoribosyltransferase (175 aa).

Residues Arg89, Lys90, Lys93, and 115 to 123 each bind 5-phospho-alpha-D-ribose 1-diphosphate; that span reads EDIATTGQS. Residues Thr119 and Arg147 each coordinate orotate.

The protein belongs to the purine/pyrimidine phosphoribosyltransferase family. PyrE subfamily. In terms of assembly, homodimer. Mg(2+) serves as cofactor.

The enzyme catalyses orotidine 5'-phosphate + diphosphate = orotate + 5-phospho-alpha-D-ribose 1-diphosphate. Its pathway is pyrimidine metabolism; UMP biosynthesis via de novo pathway; UMP from orotate: step 1/2. Catalyzes the transfer of a ribosyl phosphate group from 5-phosphoribose 1-diphosphate to orotate, leading to the formation of orotidine monophosphate (OMP). This chain is Orotate phosphoribosyltransferase, found in Halobacterium salinarum (strain ATCC 700922 / JCM 11081 / NRC-1) (Halobacterium halobium).